Consider the following 145-residue polypeptide: MLKIIQGALDTRELLKAYQEEACAKNFGAFCVFVGIVRKEDNIQGLSFDIYEALLKTWFEKWHHKAKDLGVVLKMAHSLGDVLIGQSSFLCVSMGKNRKNALELYENFIEDFKHNAPIWKYDLIHNKRIYAKERSHPLKGSGLLA.

Substrate-binding positions include 36–38, 97–98, Lys-113, and 120–122; these read IVR, NR, and KYD.

The protein belongs to the MoaE family. As to quaternary structure, heterotetramer of 2 MoaD subunits and 2 MoaE subunits. Also stable as homodimer. The enzyme changes between these two forms during catalysis.

It carries out the reaction 2 [molybdopterin-synthase sulfur-carrier protein]-C-terminal-Gly-aminoethanethioate + cyclic pyranopterin phosphate + H2O = molybdopterin + 2 [molybdopterin-synthase sulfur-carrier protein]-C-terminal Gly-Gly + 2 H(+). It participates in cofactor biosynthesis; molybdopterin biosynthesis. In terms of biological role, converts molybdopterin precursor Z into molybdopterin. This requires the incorporation of two sulfur atoms into precursor Z to generate a dithiolene group. The sulfur is provided by MoaD. This Helicobacter pylori (strain ATCC 700392 / 26695) (Campylobacter pylori) protein is Molybdopterin synthase catalytic subunit (moaE).